A 430-amino-acid chain; its full sequence is tRNA(Ile)-lysidine synthase (430 aa).

ATP is bound at residue 24–29; that stretch reads SGGLDS.

It belongs to the tRNA(Ile)-lysidine synthase family.

Its subcellular location is the cytoplasm. It carries out the reaction cytidine(34) in tRNA(Ile2) + L-lysine + ATP = lysidine(34) in tRNA(Ile2) + AMP + diphosphate + H(+). Functionally, ligates lysine onto the cytidine present at position 34 of the AUA codon-specific tRNA(Ile) that contains the anticodon CAU, in an ATP-dependent manner. Cytidine is converted to lysidine, thus changing the amino acid specificity of the tRNA from methionine to isoleucine. In Haemophilus influenzae (strain PittEE), this protein is tRNA(Ile)-lysidine synthase.